Here is a 1131-residue protein sequence, read N- to C-terminus: Chitin synthase 1 (1131 aa).

Residues 1–20 (MSDQNNRSRNEYHSNRKNEP) are compositionally biased toward basic and acidic residues. The interval 1 to 22 (MSDQNNRSRNEYHSNRKNEPSY) is disordered. A phosphoserine mark is found at serine 34, serine 35, serine 270, serine 299, and serine 318. The disordered stretch occupies residues 282–305 (YLHDDSRPVNDGKEELDSVKSGYS). Threonine 328 is modified (phosphothreonine). Serine 358 is subject to Phosphoserine. 7 consecutive transmembrane segments (helical) span residues 795 to 815 (FFYL…FFLV), 833 to 853 (VLSV…FILS), 866 to 886 (VLTC…SIFM), 914 to 934 (IVIS…IYLQ), 942 to 962 (FIQY…YAFC), 1042 to 1062 (LVII…LETG), and 1101 to 1121 (ILWL…IYMI).

The protein belongs to the chitin synthase family.

It is found in the cell membrane. The catalysed reaction is [(1-&gt;4)-N-acetyl-beta-D-glucosaminyl](n) + UDP-N-acetyl-alpha-D-glucosamine = [(1-&gt;4)-N-acetyl-beta-D-glucosaminyl](n+1) + UDP + H(+). Requires proteolytic activation. Polymerizes chitin, a structural polymer of the cell wall and septum, by transferring the sugar moiety of UDP-GlcNAc to the non-reducing end of the growing chitin polymer. Required for mitotic division septum formation during adverse conditions. The protein is Chitin synthase 1 (CHS1) of Saccharomyces cerevisiae (strain ATCC 204508 / S288c) (Baker's yeast).